A 360-amino-acid polypeptide reads, in one-letter code: Dual-specificity RNA methyltransferase RlmN (360 aa).

The active-site Proton acceptor is the E89. The region spanning D95–D330 is the Radical SAM core domain. C102 and C333 are oxidised to a cystine. The [4Fe-4S] cluster site is built by C109, C113, and C116. Residues G159–E160, S191, S213–H215, and N290 contribute to the S-adenosyl-L-methionine site. C333 (S-methylcysteine intermediate) is an active-site residue.

The protein belongs to the radical SAM superfamily. RlmN family. It depends on [4Fe-4S] cluster as a cofactor.

The protein localises to the cytoplasm. The enzyme catalyses adenosine(2503) in 23S rRNA + 2 reduced [2Fe-2S]-[ferredoxin] + 2 S-adenosyl-L-methionine = 2-methyladenosine(2503) in 23S rRNA + 5'-deoxyadenosine + L-methionine + 2 oxidized [2Fe-2S]-[ferredoxin] + S-adenosyl-L-homocysteine. The catalysed reaction is adenosine(37) in tRNA + 2 reduced [2Fe-2S]-[ferredoxin] + 2 S-adenosyl-L-methionine = 2-methyladenosine(37) in tRNA + 5'-deoxyadenosine + L-methionine + 2 oxidized [2Fe-2S]-[ferredoxin] + S-adenosyl-L-homocysteine. Specifically methylates position 2 of adenine 2503 in 23S rRNA and position 2 of adenine 37 in tRNAs. m2A2503 modification seems to play a crucial role in the proofreading step occurring at the peptidyl transferase center and thus would serve to optimize ribosomal fidelity. This is Dual-specificity RNA methyltransferase RlmN from Alkalilimnicola ehrlichii (strain ATCC BAA-1101 / DSM 17681 / MLHE-1).